A 215-amino-acid chain; its full sequence is MVTAAMVKELRERTGAGMMECKKALAHTDGDMEKAVAYLRERGLAAAAKKASRVAAEGLVEAYIHGGGRIGVLVEVNCETDFVAKTDDYKALCKDIAMQIAAAKPEYVRREEVPAEQIEKEKEILRNQALNEGKPEKIVDKMVEGRIEKYFKEICLLEQPFIKNPDVTVQQMITEAVAKIGENINVRRFVRFELGEGLAKRQDDFASEVMAEINK.

The involved in Mg(2+) ion dislocation from EF-Tu stretch occupies residues 80–83; that stretch reads TDFV.

It belongs to the EF-Ts family.

The protein localises to the cytoplasm. Associates with the EF-Tu.GDP complex and induces the exchange of GDP to GTP. It remains bound to the aminoacyl-tRNA.EF-Tu.GTP complex up to the GTP hydrolysis stage on the ribosome. This chain is Elongation factor Ts, found in Heliobacterium modesticaldum (strain ATCC 51547 / Ice1).